The primary structure comprises 36 residues: Kappa-isophellitoxin-Tst1a (36 aa).

Residues Cys2–Cys36 enclose the ShKT domain. Intrachain disulfides connect Cys2–Cys36, Cys11–Cys29, and Cys18–Cys33.

Belongs to the sea anemone type 1 potassium channel toxin family. Type 1a subfamily. In terms of tissue distribution, predominantly expressed in mesenterial filaments (at protein level), a morphological structure that has a functional role in prey killing and digestion. Also expressed in club-tips, tentacles, actinopharynx, body column, mesenterial filaments and pedal disk.

The protein resides in the secreted. Its subcellular location is the nematocyst. Its function is as follows. Probable toxin with unknown function. Does not inhibit all channels tested. Is not cytotoxic on macrophage. The chain is Kappa-isophellitoxin-Tst1a from Telmatactis stephensoni (Sea anemone).